We begin with the raw amino-acid sequence, 3411 residues long: Genome polyprotein (3411 aa).

Residues 1 to 104 (MSGRKAQGKT…LSSRKRRSHD (104 aa)) are Cytoplasmic-facing. A hydrophobic; homodimerization of capsid protein C region spans residues 38-72 (PGPSRGVQGFIFFFLFNILTGKKITAHLKRLWKML). Residues 102–121 (SHDVLTVQFLILGMLLMTGG) constitute a propeptide, ER anchor for the capsid protein C, removed in mature form by serine protease NS3. The helical transmembrane segment at 105-125 (VLTVQFLILGMLLMTGGVTLV) threads the bilayer. At 126–244 (RKNRWLLLNV…GERQLQKIER (119 aa)) the chain is on the extracellular side. Residues N134 and N150 are each glycosylated (N-linked (GlcNAc...) asparagine; by host). A helical transmembrane segment spans residues 245-265 (WFVRNPFFAVTALTIAYLVGS). Residues 266–270 (NMTQR) are Cytoplasmic-facing. A helical membrane pass occupies residues 271 to 285 (VVIALLVLAVGPAYS). Residues 286–730 (AHCIGITDRD…TVFGSAFQGL (445 aa)) lie on the Extracellular side of the membrane. Cystine bridges form between C288–C315, C345–C401, C345–C406, C359–C390, C377–C401, C377–C406, C467–C568, and C585–C615. Residues 383–396 (DRGWGNGCGLFGKG) form a fusion peptide region. The helical transmembrane segment at 731–751 (FGGLNWITKVIMGAVLIWVGI) threads the bilayer. Residues 752–757 (NTRNMT) lie on the Extracellular side of the membrane. A helical transmembrane segment spans residues 758–778 (MSMSMILVGVIMMFLSLGVGA). Residues 779–1132 (DQGCAINFGK…LVRSWVTAGE (354 aa)) are Extracellular-facing. Cystine bridges form between C782-C793, C833-C921, C957-C1002, C1058-C1107, C1069-C1091, and C1090-C1094. N-linked (GlcNAc...) asparagine; by host glycosylation is found at N908 and N986. A helical transmembrane segment spans residues 1133–1153 (IHAVPFGLVSMMIAMEVVLRK). Residues 1154-1201 (RQGPKQMLVGGVVLLGAMLVGQVTLLDLLKLTVAVGLHFHEMNNGGDA) are Cytoplasmic-facing. Residues 1202 to 1222 (MYMALIAAFSIRPGLLIGFGL) traverse the membrane as a helical segment. Residues 1223 to 1287 (RTLWSPRERL…ILPLMALLTP (65 aa)) are Lumenal-facing. The helical transmembrane segment at 1288 to 1308 (VTMAEVRLAAMFFCAVVIIGV) threads the bilayer. Over 1309-1355 (LHQNFKDTSMQKTIPLVALTLTSYLGLTQPFLGLCAFLATRIFGRRS) the chain is Cytoplasmic. The chain crosses the membrane as a helical span at residues 1356–1376 (IPVNEALAAAGLVGVLAGLAF). Over 1377 to 1378 (QE) the chain is Lumenal. A helical membrane pass occupies residues 1379–1399 (MENFLGPIAVGGLLMMLVSVA). The Cytoplasmic segment spans residues 1400-1456 (GRVDGLELKKLGEVSWEEEAEISGSSARYDVALSEQGEFKLLSEEKVPWDQVVMTSL). The tract at residues 1407-1446 (LKKLGEVSWEEEAEISGSSARYDVALSEQGEFKLLSEEKV) is interacts with and activates NS3 protease. An intramembrane region (helical) is located at residues 1457–1477 (ALVGAALHPFALLLVLAGWLF). Residues 1478–2157 (HVRGARRSGD…RNALSMMPEA (680 aa)) lie on the Cytoplasmic side of the membrane. The Peptidase S7 domain maps to 1485–1665 (SGDVLWDIPT…EVKEEGKEEL (181 aa)). Active-site charge relay system; for serine protease NS3 activity residues include H1537, D1561, and S1622. Residues 1669-1825 (PTMLKKGMTT…HSNGEIEDVQ (157 aa)) form the Helicase ATP-binding domain. The important for RNA-binding stretch occupies residues 1673 to 1676 (KKGM). ATP is bound at residue 1682 to 1689 (FHPGAGKT). A DEAH box motif is present at residues 1773 to 1776 (DEAH). A Helicase C-terminal domain is found at 1820–1997 (EIEDVQTDIP…VRGGMVAPLY (178 aa)). N6-acetyllysine; by host is present on K1877. The helical transmembrane segment at 2158–2178 (MTIVMLFILAGLLTSGMVIFF) threads the bilayer. Residues 2179–2186 (MSPKGISR) are Lumenal-facing. An intramembrane region (helical) is located at residues 2187 to 2207 (MSMAMGTMAGCGYLMFLGGVK). The Lumenal portion of the chain corresponds to 2208-2209 (PT). Residues 2210 to 2230 (HISYVMLIFFVLMVVVIPEPG) form a helical membrane-spanning segment. At 2231-2241 (QQRSIQDNQVA) the chain is on the cytoplasmic side. Residues 2242–2262 (YLIIGILTLVSAVAANELGML) form a helical membrane-spanning segment. Topologically, residues 2263-2293 (EKTKEDLFGKKNLIPSSASPWSWPDLDLKPG) are lumenal. Positions 2294 to 2314 (AAWTVYVGIVTMLSPMLHHWI) form an intramembrane region, helical. Residues 2315 to 2360 (KVEYGNLSLSGIAQSASVLSFMDKGIPFMKMNISVIMLLVSGWNSI) lie on the Lumenal side of the membrane. The helical transmembrane segment at 2361–2381 (TVMPLLCGIGCAMLHWSLILP) threads the bilayer. Over 2382 to 2421 (GIKAQQSKLAQRRVFHGVAENPVVDGNPTVDIEEAPEMPA) the chain is Cytoplasmic. A helical membrane pass occupies residues 2422-2442 (LYEKKLALYLLLALSLASVAM). Topologically, residues 2443–2445 (CRT) are lumenal. Residues 2446-2466 (PFSLAEGIVLASAALGPLIEG) traverse the membrane as a helical segment. Residues 2467–3411 (NTSLLWNGPM…DADLQLGELI (945 aa)) are Cytoplasmic-facing. The mRNA cap 0-1 NS5-type MT domain maps to 2507–2771 (GSANGKTLGE…DVILPIGTRS (265 aa)). S2562 provides a ligand contact to S-adenosyl-L-methionine. S2562 carries the phosphoserine modification. The active-site For 2'-O-MTase activity is K2567. 6 residues coordinate S-adenosyl-L-methionine: G2592, W2593, T2610, L2611, D2637, and I2638. The active-site For 2'-O-MTase activity is D2652. Residue I2653 coordinates S-adenosyl-L-methionine. Residues K2688 and E2724 each act as for 2'-O-MTase activity in the active site. S-adenosyl-L-methionine is bound at residue Y2726. The Nuclear localization signal signature appears at 2878–2911 (RKIMKVVNRWLFRHLAREKNPRLCTKEEFIAKVR). 4 residues coordinate Zn(2+): E2945, H2949, C2954, and C2957. One can recognise a RdRp catalytic domain in the interval 3035-3187 (GGFYADDTAG…RPIDDRFGLA (153 aa)). Zn(2+) contacts are provided by H3222, C3238, and C3357.

This sequence in the N-terminal section; belongs to the class I-like SAM-binding methyltransferase superfamily. mRNA cap 0-1 NS5-type methyltransferase family. Homodimer. Interacts (via N-terminus) with host EXOC1 (via C-terminus); this interaction results in EXOC1 degradation through the proteasome degradation pathway. In terms of assembly, forms heterodimers with envelope protein E in the endoplasmic reticulum and Golgi. As to quaternary structure, homodimer; in the endoplasmic reticulum and Golgi. Interacts with protein prM. Interacts with non-structural protein 1. Homodimer; Homohexamer when secreted. Interacts with envelope protein E. In terms of assembly, interacts (via N-terminus) with serine protease NS3. As to quaternary structure, forms a heterodimer with serine protease NS3. May form homooligomers. Forms a heterodimer with NS2B. Interacts with non-structural protein 2A (via N-terminus). Interacts with NS4B. Interacts with unphosphorylated RNA-directed RNA polymerase NS5; this interaction stimulates RNA-directed RNA polymerase NS5 guanylyltransferase activity. NS3 interacts with host PDCD6IP; this interaction contributes to virion release. In terms of assembly, interacts with serine protease NS3. As to quaternary structure, homodimer. Interacts with host STAT2; this interaction prevents the establishment of cellular antiviral state. Interacts with serine protease NS3. Interacts with host TRIM23; this interaction leads to NS5 ubiquitination. Post-translationally, specific enzymatic cleavages in vivo yield mature proteins. The nascent capsid protein C contains a C-terminal hydrophobic domain that act as a signal sequence for translocation of prM into the lumen of the ER. Mature capsid protein C is cleaved at a site upstream of this hydrophobic domain by NS3. prM is cleaved in post-Golgi vesicles by a host furin, releasing the mature small envelope protein M, and peptide pr. Non-structural protein 2A-alpha, a C-terminally truncated form of non-structural protein 2A, results from partial cleavage by NS3. Specific enzymatic cleavages in vivo yield mature proteins peptide 2K acts as a signal sequence and is removed from the N-terminus of NS4B by the host signal peptidase in the ER lumen. Signal cleavage at the 2K-4B site requires a prior NS3 protease-mediated cleavage at the 4A-2K site. Cleaved in post-Golgi vesicles by a host furin, releasing the mature small envelope protein M, and peptide pr. This cleavage is incomplete as up to 30% of viral particles still carry uncleaved prM. In terms of processing, N-glycosylated. Post-translationally, N-glycosylated. The excreted form is glycosylated and this is required for efficient secretion of the protein from infected cells. Polyubiquitinated; ubiquitination is probably mediated by host TRIM23 and is prerequisite for NS5-STAT2 interaction. NS5 is not ISGylated or sumoylated. In terms of processing, acetylated by host KAT5. Acetylation modulates NS3 RNA-binding and unwinding activities and plays an important positive role for viral replication. Post-translationally, phosphorylated on serines residues. This phosphorylation may trigger NS5 nuclear localization.

It is found in the virion. The protein resides in the host nucleus. Its subcellular location is the host cytoplasm. It localises to the host perinuclear region. The protein localises to the secreted. It is found in the virion membrane. The protein resides in the host endoplasmic reticulum membrane. The enzyme catalyses Selective hydrolysis of -Xaa-Xaa-|-Yaa- bonds in which each of the Xaa can be either Arg or Lys and Yaa can be either Ser or Ala.. The catalysed reaction is RNA(n) + a ribonucleoside 5'-triphosphate = RNA(n+1) + diphosphate. It catalyses the reaction a ribonucleoside 5'-triphosphate + H2O = a ribonucleoside 5'-diphosphate + phosphate + H(+). It carries out the reaction ATP + H2O = ADP + phosphate + H(+). The enzyme catalyses a 5'-end (5'-triphosphoguanosine)-ribonucleoside in mRNA + S-adenosyl-L-methionine = a 5'-end (N(7)-methyl 5'-triphosphoguanosine)-ribonucleoside in mRNA + S-adenosyl-L-homocysteine. The catalysed reaction is a 5'-end (N(7)-methyl 5'-triphosphoguanosine)-ribonucleoside in mRNA + S-adenosyl-L-methionine = a 5'-end (N(7)-methyl 5'-triphosphoguanosine)-(2'-O-methyl-ribonucleoside) in mRNA + S-adenosyl-L-homocysteine + H(+). Functionally, plays a role in virus budding by binding to the cell membrane and gathering the viral RNA into a nucleocapsid that forms the core of a mature virus particle. During virus entry, may induce genome penetration into the host cytoplasm after hemifusion induced by the surface proteins. Can migrate to the cell nucleus where it modulates host functions. Inhibits RNA silencing by interfering with host Dicer. Its function is as follows. Prevents premature fusion activity of envelope proteins in trans-Golgi by binding to envelope protein E at pH6.0. After virion release in extracellular space, gets dissociated from E dimers. In terms of biological role, acts as a chaperone for envelope protein E during intracellular virion assembly by masking and inactivating envelope protein E fusion peptide. prM is the only viral peptide matured by host furin in the trans-Golgi network probably to avoid catastrophic activation of the viral fusion activity in acidic Golgi compartment prior to virion release. prM-E cleavage is inefficient, and many virions are only partially matured. These uncleaved prM would play a role in immune evasion. Functionally, may play a role in virus budding. Exerts cytotoxic effects by activating a mitochondrial apoptotic pathway through M ectodomain. May display a viroporin activity. Binds to host cell surface receptor and mediates fusion between viral and cellular membranes. Envelope protein is synthesized in the endoplasmic reticulum in the form of heterodimer with protein prM. They play a role in virion budding in the ER, and the newly formed immature particle is covered with 60 spikes composed of heterodimer between precursor prM and envelope protein E. The virion is transported to the Golgi apparatus where the low pH causes dissociation of PrM-E heterodimers and formation of E homodimers. prM-E cleavage is inefficient, and many virions are only partially matured. These uncleaved prM would play a role in immune evasion. Its function is as follows. Involved in immune evasion, pathogenesis and viral replication. Once cleaved off the polyprotein, is targeted to three destinations: the viral replication cycle, the plasma membrane and the extracellular compartment. Essential for viral replication. Required for formation of the replication complex and recruitment of other non-structural proteins to the ER-derived membrane structures. Excreted as a hexameric lipoparticle that plays a role against host immune response. Antagonizing the complement function. Binds to the host macrophages and dendritic cells. Inhibits signal transduction originating from Toll-like receptor 3 (TLR3). In terms of biological role, component of the viral RNA replication complex that functions in virion assembly and antagonizes the host immune response. Functionally, required cofactor for the serine protease function of NS3. May have membrane-destabilizing activity and form viroporins. Displays three enzymatic activities: serine protease, NTPase and RNA helicase. NS3 serine protease, in association with NS2B, performs its autocleavage and cleaves the polyprotein at dibasic sites in the cytoplasm: C-prM, NS2A-NS2B, NS2B-NS3, NS3-NS4A, NS4A-2K and NS4B-NS5. NS3 RNA helicase binds RNA and unwinds dsRNA in the 3' to 5' direction. Also plays a role in virus assembly. Its function is as follows. Regulates the ATPase activity of the NS3 helicase activity. NS4A allows NS3 helicase to conserve energy during unwinding. In terms of biological role, functions as a signal peptide for NS4B and is required for the interferon antagonism activity of the latter. Functionally, induces the formation of ER-derived membrane vesicles where the viral replication takes place. Inhibits interferon (IFN)-induced host STAT1 phosphorylation and nuclear translocation, thereby preventing the establishment of cellular antiviral state by blocking the IFN-alpha/beta pathway. Replicates the viral (+) and (-) RNA genome, and performs the capping of genomes in the cytoplasm. NS5 methylates viral RNA cap at guanine N-7 and ribose 2'-O positions. Besides its role in RNA genome replication, also prevents the establishment of cellular antiviral state by blocking the interferon-alpha/beta (IFN-alpha/beta) signaling pathway. IFN-I induces binding of NS5 to host IFN-activated transcription factor STAT2, preventing its transcriptional activity. Host TRIM23 is the E3 ligase that interacts with and polyubiquitinates NS5 to promote its binding to STAT2 and trigger IFN-I signaling inhibition. This Aedes aegypti (Yellowfever mosquito) protein is Genome polyprotein.